Reading from the N-terminus, the 138-residue chain is HTH-type transcriptional regulator CymR (138 aa).

The HTH rrf2-type domain occupies 2–125 (KISTKGRYGL…DSTTLEDLAS (124 aa)). Residues 28 to 51 (LKSIAQTNNLSEHYLEQLVSPLRN) constitute a DNA-binding region (H-T-H motif).

Homodimer. Forms homotetramers at higher concentrations of protein. Forms CymR(2):CysK(2) or CymR(4):CysK(4) complexes in the absence of O-acetylserine.

In terms of biological role, master repressor of cysteine metabolism in B.subtilis. Controls the expression of genes involved either in cysteine synthesis from sulfide (cysK), sulfonates (ssu), or methionine (mccAB) or in cystine uptake (tcyP). Activity of CymR is positively regulated by CysK in response to cysteine availability. When cysteine is present, the pool of O-acetylserine (OAS) is low, which leads to the formation of a CymR-CysK complex and transcriptional repression of the CymR regulon occurs. In the absence of cysteine, the OAS pool is high and the CymR-CysK complex is mostly dissociated, leading to a faster dissociation of CymR from its DNA targets and the lifting of CymR-dependent repression. The protein is HTH-type transcriptional regulator CymR (cymR) of Bacillus subtilis (strain 168).